The sequence spans 269 residues: Phosphate import ATP-binding protein PstB (269 aa).

The ABC transporter domain maps to 14–253 (LSLENVSISY…EFNSTKKIFN (240 aa)). ATP is bound at residue 46-53 (GPSGCGKS).

This sequence belongs to the ABC transporter superfamily. Phosphate importer (TC 3.A.1.7) family. The complex is composed of two ATP-binding proteins (PstB), two transmembrane proteins (PstC and PstA) and a solute-binding protein (PstS).

It is found in the cell inner membrane. It catalyses the reaction phosphate(out) + ATP + H2O = ADP + 2 phosphate(in) + H(+). In terms of biological role, part of the ABC transporter complex PstSACB involved in phosphate import. Responsible for energy coupling to the transport system. The sequence is that of Phosphate import ATP-binding protein PstB from Prochlorococcus marinus (strain MIT 9312).